A 329-amino-acid polypeptide reads, in one-letter code: Probable cell division protein WhiA (329 aa).

Positions 275-308 (SLEELGALADPPLTKDAVAGRIRRLLAMADKRAQ) form a DNA-binding region, H-T-H motif.

Belongs to the WhiA family.

In terms of biological role, involved in cell division and chromosome segregation. This chain is Probable cell division protein WhiA, found in Streptomyces avermitilis (strain ATCC 31267 / DSM 46492 / JCM 5070 / NBRC 14893 / NCIMB 12804 / NRRL 8165 / MA-4680).